Consider the following 29-residue polypeptide: Conotoxin Bu17 (29 aa).

Intrachain disulfides connect Cys4–Cys19, Cys5–Cys25, and Cys15–Cys26. Cysteine amide is present on Cys26.

The protein belongs to the conotoxin M superfamily. Expressed by the venom duct.

Its subcellular location is the secreted. The protein is Conotoxin Bu17 of Conus bullatus (Bubble cone).